The chain runs to 349 residues: Phosphoribosylformylglycinamidine cyclo-ligase (349 aa).

Belongs to the AIR synthase family.

Its subcellular location is the cytoplasm. It catalyses the reaction 2-formamido-N(1)-(5-O-phospho-beta-D-ribosyl)acetamidine + ATP = 5-amino-1-(5-phospho-beta-D-ribosyl)imidazole + ADP + phosphate + H(+). The protein operates within purine metabolism; IMP biosynthesis via de novo pathway; 5-amino-1-(5-phospho-D-ribosyl)imidazole from N(2)-formyl-N(1)-(5-phospho-D-ribosyl)glycinamide: step 2/2. The sequence is that of Phosphoribosylformylglycinamidine cyclo-ligase from Methanococcus maripaludis (strain C7 / ATCC BAA-1331).